Consider the following 166-residue polypeptide: Large ribosomal subunit protein uL11 (166 aa).

Belongs to the universal ribosomal protein uL11 family.

This protein binds directly to 26S ribosomal RNA. The protein is Large ribosomal subunit protein uL11 (RPL12) of Prunus armeniaca (Apricot).